The sequence spans 342 residues: MSPDALTPHDPRVTHHYITIPSTSLTYHYLLANPDSASFPHPTATVLLLHGWPDLSLGWRYQVPFLLSLGLRVIIPDMLGYGLTSAPSSPSEYSLKNLSFHMTHIIRQVNPSGQPVLLGTHDWGAFLGWRLALYYPELIKGIFAFCIPYSPPETKVTSLEEHIERHPELGYQLQNARGEVEEAVNGGSKERLRGWLNAMFGGLAKEDGGVMAFDPWKGVDVAKLEEVGGSPLVSEEVMDFYVEEYSRNGIRGPMNWYRTREINLEDELPLAEKCENWQFQVPAMIVMVGHDPALPPELTDGMEKYFAKGLRKEVIPEASHWVLIHTPEEVNKLVGEFLQQFL.

In terms of domain architecture, AB hydrolase-1 spans 44–332 (ATVLLLHGWP…LIHTPEEVNK (289 aa)). Aspartate 122 serves as the catalytic Nucleophile. Residue histidine 320 is the Proton acceptor of the active site.

This sequence belongs to the AB hydrolase superfamily. Epoxide hydrolase family.

Functionally, highly reducing polyketide synthase; part of the gene cluster that mediates the biosynthesis of sordarial, a salicylic aldehyde structurally related to the phytotoxin pyriculol. The most interesting aspect of this pathway is formation of an aromatic product from the highly reducing polyketide synthase srdA. SrdA synthesizes a reduced polyketide chain from one molecule of acetyl-CoA and five molecules of malonyl-CoA. The polyketide chain is then reductively released as an aldehyde. The oxidoreductases srdC, srdD and srdE then oxidize one of the hydroxy groups to facilitate the intramolecular aldol condensation, followed by dehydration to yield a salicylic aldehyde. This aldehyde can undergo facile reduction by endogenous reductases to yield the alcohol 1-hydroxy-2-hydroxymethyl-3-pent-1,3-dienylbenzene. The flavin-dependent srdI counteract against the propensity of the aldehydes to be reduced under physiological conditions and is responsible for reoxidizing 1-hydroxy-2-hydroxymethyl-3-pent-1,3-dienylbenzene back to the salicylic aldehyde. This salicylic aldehyde is then selectively epoxidized by the cupin-domain-containing oxidoreductase srdB to yield the epoxide, which can be hydrolyzed stereoselectively by the hydrolase srdG to give the final product sordarial. This is Epoxide hydrolase srdG from Neurospora crassa (strain ATCC 24698 / 74-OR23-1A / CBS 708.71 / DSM 1257 / FGSC 987).